Reading from the N-terminus, the 889-residue chain is Protein argonaute 15 (889 aa).

Disordered regions lie at residues 1–26 (MESH…SRKG) and 119–150 (EDAS…RMKR). The segment covering 122 to 132 (SSSGRTTTRRS) has biased composition (low complexity). Positions 264–379 (PVIEFLLFNQ…IPLELCHLVP (116 aa)) constitute a PAZ domain. The 308-residue stretch at 546–853 (FVLCVLPERK…AAAQVSQFVR (308 aa)) folds into the Piwi domain. The interval 857–878 (AASEGSGDGGAPPRPVPELPRL) is disordered.

It belongs to the argonaute family. Ago subfamily.

Probably involved in the RNA silencing pathway. May bind to short RNAs such as microRNAs (miRNAs) or short interfering RNAs (siRNAs), and represses the translation of mRNAs which are complementary to them. In Oryza sativa subsp. japonica (Rice), this protein is Protein argonaute 15 (AGO15).